Here is a 251-residue protein sequence, read N- to C-terminus: Orcokinin peptides type A (251 aa).

A signal peptide spans 1–20 (MTAQMFTIALLLSLSAIAAA). Propeptides lie at residues 21-46 (GTIK…GAPV), 225-231 (DYDVFPD), and 249-251 (NVE).

Belongs to the orcokinin family.

Its subcellular location is the secreted. Functionally, myotropic peptides that enhance both the frequency and amplitude of spontaneous hindgut contractions. The sequence is that of Orcokinin peptides type A from Procambarus clarkii (Red swamp crayfish).